We begin with the raw amino-acid sequence, 332 residues long: tRNA N6-adenosine threonylcarbamoyltransferase (332 aa).

Residues His-107 and His-111 each coordinate Fe cation. Substrate-binding positions include 129–133 (LVSGG), Asp-162, Gly-175, and Asn-267. Asp-295 provides a ligand contact to Fe cation.

The protein belongs to the KAE1 / TsaD family. The cofactor is Fe(2+).

It is found in the cytoplasm. It carries out the reaction L-threonylcarbamoyladenylate + adenosine(37) in tRNA = N(6)-L-threonylcarbamoyladenosine(37) in tRNA + AMP + H(+). In terms of biological role, required for the formation of a threonylcarbamoyl group on adenosine at position 37 (t(6)A37) in tRNAs that read codons beginning with adenine. Is involved in the transfer of the threonylcarbamoyl moiety of threonylcarbamoyl-AMP (TC-AMP) to the N6 group of A37, together with TsaE and TsaB. TsaD likely plays a direct catalytic role in this reaction. This Campylobacter hominis (strain ATCC BAA-381 / DSM 21671 / CCUG 45161 / LMG 19568 / NCTC 13146 / CH001A) protein is tRNA N6-adenosine threonylcarbamoyltransferase.